Consider the following 212-residue polypeptide: Orotate phosphoribosyltransferase (212 aa).

Lysine 26 contacts 5-phospho-alpha-D-ribose 1-diphosphate. Residue 34 to 35 (FF) coordinates orotate. 5-phospho-alpha-D-ribose 1-diphosphate is bound by residues 72 to 73 (YK), arginine 98, lysine 99, lysine 102, histidine 104, and 123 to 131 (DDVISAGTS). Orotate-binding residues include serine 127 and arginine 155.

It belongs to the purine/pyrimidine phosphoribosyltransferase family. PyrE subfamily. As to quaternary structure, homodimer. It depends on Mg(2+) as a cofactor.

The enzyme catalyses orotidine 5'-phosphate + diphosphate = orotate + 5-phospho-alpha-D-ribose 1-diphosphate. Its pathway is pyrimidine metabolism; UMP biosynthesis via de novo pathway; UMP from orotate: step 1/2. Catalyzes the transfer of a ribosyl phosphate group from 5-phosphoribose 1-diphosphate to orotate, leading to the formation of orotidine monophosphate (OMP). This Thiobacillus denitrificans (strain ATCC 25259 / T1) protein is Orotate phosphoribosyltransferase.